The primary structure comprises 472 residues: Ribosomal RNA small subunit methyltransferase F (472 aa).

S-adenosyl-L-methionine contacts are provided by residues 123-129 (AAAPGSK), glutamate 147, aspartate 174, and aspartate 192. Cysteine 245 serves as the catalytic Nucleophile.

It belongs to the class I-like SAM-binding methyltransferase superfamily. RsmB/NOP family.

The protein resides in the cytoplasm. It carries out the reaction cytidine(1407) in 16S rRNA + S-adenosyl-L-methionine = 5-methylcytidine(1407) in 16S rRNA + S-adenosyl-L-homocysteine + H(+). Functionally, specifically methylates the cytosine at position 1407 (m5C1407) of 16S rRNA. This chain is Ribosomal RNA small subunit methyltransferase F, found in Vibrio vulnificus (strain CMCP6).